Consider the following 196-residue polypeptide: ATP-dependent Clp protease proteolytic subunit 1 (196 aa).

The Nucleophile role is filled by S96. The active site involves H121.

It belongs to the peptidase S14 family. In terms of assembly, fourteen ClpP subunits assemble into 2 heptameric rings which stack back to back to give a disk-like structure with a central cavity, resembling the structure of eukaryotic proteasomes.

The protein localises to the cytoplasm. It catalyses the reaction Hydrolysis of proteins to small peptides in the presence of ATP and magnesium. alpha-casein is the usual test substrate. In the absence of ATP, only oligopeptides shorter than five residues are hydrolyzed (such as succinyl-Leu-Tyr-|-NHMec, and Leu-Tyr-Leu-|-Tyr-Trp, in which cleavage of the -Tyr-|-Leu- and -Tyr-|-Trp bonds also occurs).. Functionally, cleaves peptides in various proteins in a process that requires ATP hydrolysis. Has a chymotrypsin-like activity. Plays a major role in the degradation of misfolded proteins. This is ATP-dependent Clp protease proteolytic subunit 1 from Prochlorococcus marinus (strain NATL2A).